Here is a 122-residue protein sequence, read N- to C-terminus: Large ribosomal subunit protein bL12 (122 aa).

The protein belongs to the bacterial ribosomal protein bL12 family. As to quaternary structure, homodimer. Part of the ribosomal stalk of the 50S ribosomal subunit. Forms a multimeric L10(L12)X complex, where L10 forms an elongated spine to which 2 to 4 L12 dimers bind in a sequential fashion. Binds GTP-bound translation factors.

In terms of biological role, forms part of the ribosomal stalk which helps the ribosome interact with GTP-bound translation factors. Is thus essential for accurate translation. This Buchnera aphidicola subsp. Cinara cedri (strain Cc) protein is Large ribosomal subunit protein bL12.